Consider the following 343-residue polypeptide: Nuclear distribution protein nudE-like 1 (343 aa).

A coiled-coil region spans residues 25–190 (KYKQSFQEAR…LAVRERQQEV (166 aa)). Disordered regions lie at residues 184 to 204 (RERQ…LDCE) and 322 to 343 (QGTP…PLSV).

This sequence belongs to the nudE family. Phosphorylated in mitosis.

It localises to the cytoplasm. The protein localises to the cytoskeleton. Its subcellular location is the microtubule organizing center. It is found in the centrosome. The protein resides in the spindle. In terms of biological role, required for organization of the cellular microtubule array and microtubule anchoring at the centrosome. Positively regulates the activity of the minus-end directed microtubule motor protein dynein. May enhance dynein-mediated microtubule sliding by targeting dynein to the microtubule plus end. Positively regulates lysosome peripheral distribution and ruffled border formation in osteoclasts. This Gallus gallus (Chicken) protein is Nuclear distribution protein nudE-like 1 (NDEL1).